A 101-amino-acid chain; its full sequence is Small ribosomal subunit protein uS14 (101 aa).

It belongs to the universal ribosomal protein uS14 family. In terms of assembly, part of the 30S ribosomal subunit. Contacts proteins S3 and S10.

Functionally, binds 16S rRNA, required for the assembly of 30S particles and may also be responsible for determining the conformation of the 16S rRNA at the A site. This is Small ribosomal subunit protein uS14 from Methylococcus capsulatus (strain ATCC 33009 / NCIMB 11132 / Bath).